Here is a 122-residue protein sequence, read N- to C-terminus: Acidic phospholipase A2 CTs-A3 (122 aa).

7 disulfides stabilise this stretch: Cys-26-Cys-116, Cys-28-Cys-44, Cys-43-Cys-95, Cys-49-Cys-122, Cys-50-Cys-88, Cys-57-Cys-81, and Cys-75-Cys-86. Ca(2+)-binding residues include Tyr-27, Gly-29, and Gly-31. His-47 is an active-site residue. Residue Asp-48 participates in Ca(2+) binding. Residue Asp-89 is part of the active site.

Ca(2+) is required as a cofactor. As to expression, expressed by the venom gland.

The protein localises to the secreted. The enzyme catalyses a 1,2-diacyl-sn-glycero-3-phosphocholine + H2O = a 1-acyl-sn-glycero-3-phosphocholine + a fatty acid + H(+). Its function is as follows. Snake venom phospholipase A2 (PLA2) that shows a moderate inhibition of ADP-induced human platelet aggregation when tested on platelet rich plasma. Exhibits moderate hydrolytic activities and prefers the anionic micelles (dPPC with deoxycholate) to the zwitterionic micelles (dPPC with Triton X-100). PLA2 catalyzes the calcium-dependent hydrolysis of the 2-acyl groups in 3-sn-phosphoglycerides. The sequence is that of Acidic phospholipase A2 CTs-A3 from Trimeresurus stejnegeri (Chinese green tree viper).